Here is a 675-residue protein sequence, read N- to C-terminus: Probable metal-nicotianamine transporter YSL16 (675 aa).

Residues 1–11 (MDRHALGGGGA) show a composition bias toward gly residues. The disordered stretch occupies residues 1–20 (MDRHALGGGGALEIEKTPEA). The next 14 helical transmembrane spans lie at 50–70 (GMVA…KLSL), 73–93 (GLIP…LRGW), 118–138 (CAVA…LLGL), 162–182 (GIGW…LTLL), 231–251 (ISFL…CGFL), 283–303 (LVNL…WPLI), 329–349 (FICI…VIVV), 393–413 (MAYT…PVMF), 421–441 (VIIA…GTGL), 453–473 (IALF…AGLV), 507–527 (VGQV…FFLF), 567–587 (LQLC…RDFL), 605–625 (FLVG…VFLW), and 633–653 (AALL…IWTF).

It belongs to the YSL (TC 2.A.67.2) family. As to expression, expressed in roots.

Its subcellular location is the membrane. In terms of biological role, may be involved in the transport of nicotianamine-chelated metals. This chain is Probable metal-nicotianamine transporter YSL16 (YSL16), found in Oryza sativa subsp. japonica (Rice).